The chain runs to 946 residues: Altered inheritance of mitochondria protein 3 (946 aa).

Disordered regions lie at residues 1–333 (MGFW…PQMN) and 351–903 (MSST…KSLE). Positions 36–54 (ASKKHYNNSKARRERKSGK) are enriched in basic residues. A phosphoserine mark is found at Ser57, Ser58, and Ser64. Residues 59-68 (DEEYESEDEM) show a composition bias toward acidic residues. A compositionally biased stretch (basic and acidic residues) spans 69 to 84 (EHERKPTDIRSLKDPK). 2 stretches are compositionally biased toward low complexity: residues 93 to 105 (PGQKTYTGQQQQQ) and 130 to 158 (QSQYAQPQYNQYPQQQLQQGVVPQQPPIY). Residues 166 to 244 (GSNSNATSYQ…YVSHGSTNLG (79 aa)) are compositionally biased toward polar residues. 2 stretches are compositionally biased toward low complexity: residues 245–267 (QSQFPSGQQQQPTTQFGQQVLPS) and 306–320 (QQQQQQQQQQQQQQQ). Positions 351 to 364 (MSSTTNMQDSNPSY) are enriched in polar residues. Pro residues predominate over residues 376–392 (GGQPPVPVRMQPQPPQP). Residues 463–472 (IQPNTTSSAA) are compositionally biased toward polar residues. Ser473 is modified (phosphoserine). 3 stretches are compositionally biased toward basic and acidic residues: residues 485–499 (DNERNSGNKENDEST), 523–538 (HGLDSVPSEHTRKNAS), and 608–625 (EIKDEVLPGHPSEEDRNV). 2 stretches are compositionally biased toward low complexity: residues 627-642 (PSLLPQSKPQSQSQSQ) and 666-675 (SQSSNSSDSS). The residue at position 728 (Thr728) is a Phosphothreonine. A compositionally biased stretch (basic and acidic residues) spans 748–758 (DSSKDANKYEK). The span at 762–773 (PVTSSIQAQQST) shows a compositional bias: polar residues. A Phosphothreonine modification is found at Thr860. Over residues 861 to 878 (PPRPPPSRSSPKKVPPVV) the composition is skewed to pro residues. A compositionally biased stretch (basic residues) spans 887–898 (KKPPVVPKKKPL).

This sequence belongs to the AIM3 family. As to quaternary structure, interacts with RVS167.

The protein resides in the membrane raft. The protein is Altered inheritance of mitochondria protein 3 (AIM3) of Saccharomyces cerevisiae (strain Lalvin EC1118 / Prise de mousse) (Baker's yeast).